The chain runs to 426 residues: Deoxyguanosinetriphosphate triphosphohydrolase-like protein (426 aa).

The disordered stretch occupies residues 1-23; that stretch reads MYPYSESDAQRLHQEAPKASQLA. The 151-residue stretch at 67–217 folds into the HD domain; the sequence is RLTHSLEVAQ…MDFSDDIAYS (151 aa).

This sequence belongs to the dGTPase family. Type 2 subfamily.

The polypeptide is Deoxyguanosinetriphosphate triphosphohydrolase-like protein (Corynebacterium efficiens (strain DSM 44549 / YS-314 / AJ 12310 / JCM 11189 / NBRC 100395)).